We begin with the raw amino-acid sequence, 603 residues long: Elongation factor 4 (603 aa).

The tr-type G domain maps to 7-189 (SRIRNFSIIA…SIVHLVPPPQ (183 aa)). GTP contacts are provided by residues 19–24 (DHGKST) and 136–139 (NKID).

Belongs to the TRAFAC class translation factor GTPase superfamily. Classic translation factor GTPase family. LepA subfamily.

Its subcellular location is the cell inner membrane. The enzyme catalyses GTP + H2O = GDP + phosphate + H(+). Its function is as follows. Required for accurate and efficient protein synthesis under certain stress conditions. May act as a fidelity factor of the translation reaction, by catalyzing a one-codon backward translocation of tRNAs on improperly translocated ribosomes. Back-translocation proceeds from a post-translocation (POST) complex to a pre-translocation (PRE) complex, thus giving elongation factor G a second chance to translocate the tRNAs correctly. Binds to ribosomes in a GTP-dependent manner. This is Elongation factor 4 from Rippkaea orientalis (strain PCC 8801 / RF-1) (Cyanothece sp. (strain PCC 8801)).